The chain runs to 438 residues: 23S rRNA (uracil(1939)-C(5))-methyltransferase RlmD (438 aa).

The TRAM domain maps to 4-68 (FYTPGRRTAT…RHFARGRVTR (65 aa)). [4Fe-4S] cluster-binding residues include C81, C87, C90, and C167. S-adenosyl-L-methionine contacts are provided by Q269, F298, N303, E319, N346, and D367. C393 acts as the Nucleophile in catalysis.

This sequence belongs to the class I-like SAM-binding methyltransferase superfamily. RNA M5U methyltransferase family. RlmD subfamily.

The enzyme catalyses uridine(1939) in 23S rRNA + S-adenosyl-L-methionine = 5-methyluridine(1939) in 23S rRNA + S-adenosyl-L-homocysteine + H(+). Functionally, catalyzes the formation of 5-methyl-uridine at position 1939 (m5U1939) in 23S rRNA. In Edwardsiella ictaluri (strain 93-146), this protein is 23S rRNA (uracil(1939)-C(5))-methyltransferase RlmD.